The primary structure comprises 296 residues: Acetyl-coenzyme A carboxylase carboxyl transferase subunit beta (296 aa).

The CoA carboxyltransferase N-terminal domain maps to 25 to 294 (VWTKCTSCEQ…PFVEPELISE (270 aa)). Positions 29, 32, 48, and 51 each coordinate Zn(2+). The C4-type zinc-finger motif lies at 29 to 51 (CTSCEQVLYSEELKRNLYVCPKC).

It belongs to the AccD/PCCB family. Acetyl-CoA carboxylase is a heterohexamer composed of biotin carboxyl carrier protein (AccB), biotin carboxylase (AccC) and two subunits each of ACCase subunit alpha (AccA) and ACCase subunit beta (AccD). Zn(2+) is required as a cofactor.

It localises to the cytoplasm. The enzyme catalyses N(6)-carboxybiotinyl-L-lysyl-[protein] + acetyl-CoA = N(6)-biotinyl-L-lysyl-[protein] + malonyl-CoA. It functions in the pathway lipid metabolism; malonyl-CoA biosynthesis; malonyl-CoA from acetyl-CoA: step 1/1. In terms of biological role, component of the acetyl coenzyme A carboxylase (ACC) complex. Biotin carboxylase (BC) catalyzes the carboxylation of biotin on its carrier protein (BCCP) and then the CO(2) group is transferred by the transcarboxylase to acetyl-CoA to form malonyl-CoA. This is Acetyl-coenzyme A carboxylase carboxyl transferase subunit beta from Haemophilus influenzae (strain PittEE).